Here is a 394-residue protein sequence, read N- to C-terminus: NAD(P)H-quinone oxidoreductase subunit H (394 aa).

Belongs to the complex I 49 kDa subunit family. As to quaternary structure, NDH-1 can be composed of about 15 different subunits; different subcomplexes with different compositions have been identified which probably have different functions. Post-translationally, the initiator methionine has been seen to be kept and removed.

It localises to the cellular thylakoid membrane. The enzyme catalyses a plastoquinone + NADH + (n+1) H(+)(in) = a plastoquinol + NAD(+) + n H(+)(out). It catalyses the reaction a plastoquinone + NADPH + (n+1) H(+)(in) = a plastoquinol + NADP(+) + n H(+)(out). Functionally, NDH-1 shuttles electrons from an unknown electron donor, via FMN and iron-sulfur (Fe-S) centers, to quinones in the respiratory and/or the photosynthetic chain. The immediate electron acceptor for the enzyme in this species is believed to be plastoquinone. Couples the redox reaction to proton translocation, and thus conserves the redox energy in a proton gradient. Cyanobacterial NDH-1 also plays a role in inorganic carbon-concentration. In Synechocystis sp. (strain ATCC 27184 / PCC 6803 / Kazusa), this protein is NAD(P)H-quinone oxidoreductase subunit H (ndhH).